Here is a 138-residue protein sequence, read N- to C-terminus: Cell division protein SepF (138 aa).

A disordered region spans residues 1–59 (MNNKFKDFFGFGDNDSYEERDAYEEHYDEQEEMQNSNRPTNSRDSNVVSIKAGQAGSGP). Positions 33–48 (MQNSNRPTNSRDSNVV) are enriched in polar residues.

It belongs to the SepF family. Homodimer. Interacts with FtsZ.

The protein localises to the cytoplasm. Functionally, cell division protein that is part of the divisome complex and is recruited early to the Z-ring. Probably stimulates Z-ring formation, perhaps through the cross-linking of FtsZ protofilaments. Its function overlaps with FtsA. The polypeptide is Cell division protein SepF (Lactobacillus delbrueckii subsp. bulgaricus (strain ATCC 11842 / DSM 20081 / BCRC 10696 / JCM 1002 / NBRC 13953 / NCIMB 11778 / NCTC 12712 / WDCM 00102 / Lb 14)).